The primary structure comprises 263 residues: MRYLKRVVLYRIVMVLSVFIIGCDKSSDTSEKPKEDSKEAQIKKSFAKTLDMYPIENLEDFYDKEGYRDGEFKKDDKGTWLIRSEIVKQPKGKVMKTRGMQLYINRNTKTAKGFFVLKEISENNNRVNKDKEEKYEVKMVGNKIIPTEQINDEKIKKEIENFKFFVQYGNFKNFEKYNNGEFSYNPEAPIYSAKYQLHNDDYNVRQLRKRYEISTKEAPKLLLKGGGDLKDSSVGQNDIEFTFVERKGENIYFNDSVEFIPSK.

The signal sequence occupies residues Met-1–Gly-22. Cys-23 carries N-palmitoyl cysteine lipidation. Residue Cys-23 is the site of S-diacylglycerol cysteine attachment.

This sequence belongs to the staphylococcal tandem lipoprotein family.

It is found in the cell membrane. This is an uncharacterized protein from Staphylococcus aureus (strain bovine RF122 / ET3-1).